Reading from the N-terminus, the 264-residue chain is Tryptophan synthase alpha chain (264 aa).

Catalysis depends on proton acceptor residues E49 and D60.

The protein belongs to the TrpA family. Tetramer of two alpha and two beta chains.

It catalyses the reaction (1S,2R)-1-C-(indol-3-yl)glycerol 3-phosphate + L-serine = D-glyceraldehyde 3-phosphate + L-tryptophan + H2O. It participates in amino-acid biosynthesis; L-tryptophan biosynthesis; L-tryptophan from chorismate: step 5/5. The alpha subunit is responsible for the aldol cleavage of indoleglycerol phosphate to indole and glyceraldehyde 3-phosphate. The sequence is that of Tryptophan synthase alpha chain from Picosynechococcus sp. (strain ATCC 27264 / PCC 7002 / PR-6) (Agmenellum quadruplicatum).